Reading from the N-terminus, the 127-residue chain is Large ribosomal subunit protein bL12 (127 aa).

Residues 96-127 (GTPSTLKEAVSKDDAEEAAKQLKEAGAEVEVK) form a disordered region. Basic and acidic residues predominate over residues 104 to 127 (AVSKDDAEEAAKQLKEAGAEVEVK).

The protein belongs to the bacterial ribosomal protein bL12 family. In terms of assembly, homodimer. Part of the ribosomal stalk of the 50S ribosomal subunit. Forms a multimeric L10(L12)X complex, where L10 forms an elongated spine to which 2 to 4 L12 dimers bind in a sequential fashion. Binds GTP-bound translation factors.

Functionally, forms part of the ribosomal stalk which helps the ribosome interact with GTP-bound translation factors. Is thus essential for accurate translation. This is Large ribosomal subunit protein bL12 from Oleidesulfovibrio alaskensis (strain ATCC BAA-1058 / DSM 17464 / G20) (Desulfovibrio alaskensis).